A 160-amino-acid polypeptide reads, in one-letter code: Glyoxalase domain-containing protein 5 (160 aa).

Residues 33-153 (RLDHLVLTVR…DHNLIEVSNY (121 aa)) enclose the VOC domain.

This sequence belongs to the glyoxalase I family.

This chain is Glyoxalase domain-containing protein 5 (glod5), found in Xenopus laevis (African clawed frog).